The sequence spans 288 residues: Elongation factor Ts (288 aa).

The tract at residues 82-85 (TDFV) is involved in Mg(2+) ion dislocation from EF-Tu.

It belongs to the EF-Ts family.

The protein resides in the cytoplasm. Its function is as follows. Associates with the EF-Tu.GDP complex and induces the exchange of GDP to GTP. It remains bound to the aminoacyl-tRNA.EF-Tu.GTP complex up to the GTP hydrolysis stage on the ribosome. The protein is Elongation factor Ts of Chlorobaculum parvum (strain DSM 263 / NCIMB 8327) (Chlorobium vibrioforme subsp. thiosulfatophilum).